We begin with the raw amino-acid sequence, 166 residues long: Lipoprotein signal peptidase (166 aa).

The next 4 helical transmembrane spans lie at 9–29 (AGGS…FDQL), 37–57 (VFAY…LVYN), 71–91 (WQRW…CYLL), and 100–120 (FCTA…DRLL). Active-site residues include aspartate 126 and aspartate 144. Residues 136–156 (HWPAFNLADSAITIGAALLVF) form a helical membrane-spanning segment.

The protein belongs to the peptidase A8 family.

It is found in the cell inner membrane. It catalyses the reaction Release of signal peptides from bacterial membrane prolipoproteins. Hydrolyzes -Xaa-Yaa-Zaa-|-(S,diacylglyceryl)Cys-, in which Xaa is hydrophobic (preferably Leu), and Yaa (Ala or Ser) and Zaa (Gly or Ala) have small, neutral side chains.. Its pathway is protein modification; lipoprotein biosynthesis (signal peptide cleavage). Functionally, this protein specifically catalyzes the removal of signal peptides from prolipoproteins. In Paraburkholderia phymatum (strain DSM 17167 / CIP 108236 / LMG 21445 / STM815) (Burkholderia phymatum), this protein is Lipoprotein signal peptidase.